A 73-amino-acid polypeptide reads, in one-letter code: Translation initiation factor IF-1 (73 aa).

The S1-like domain maps to 1–73 (MAKKDGVIEI…NRGRIVYRYR (73 aa)).

The protein belongs to the IF-1 family. As to quaternary structure, component of the 30S ribosomal translation pre-initiation complex which assembles on the 30S ribosome in the order IF-2 and IF-3, IF-1 and N-formylmethionyl-tRNA(fMet); mRNA recruitment can occur at any time during PIC assembly.

It localises to the cytoplasm. One of the essential components for the initiation of protein synthesis. Stabilizes the binding of IF-2 and IF-3 on the 30S subunit to which N-formylmethionyl-tRNA(fMet) subsequently binds. Helps modulate mRNA selection, yielding the 30S pre-initiation complex (PIC). Upon addition of the 50S ribosomal subunit IF-1, IF-2 and IF-3 are released leaving the mature 70S translation initiation complex. This chain is Translation initiation factor IF-1, found in Acidothermus cellulolyticus (strain ATCC 43068 / DSM 8971 / 11B).